The sequence spans 164 residues: Phosphopantetheine adenylyltransferase (164 aa).

Substrate is bound at residue S9. ATP-binding positions include 9–10 (SF) and H17. The substrate site is built by K41, L73, and K87. ATP contacts are provided by residues 88–90 (GLR), E98, and 122–128 (YSYLSSS).

This sequence belongs to the bacterial CoaD family. As to quaternary structure, homohexamer. Mg(2+) serves as cofactor.

It localises to the cytoplasm. The enzyme catalyses (R)-4'-phosphopantetheine + ATP + H(+) = 3'-dephospho-CoA + diphosphate. It functions in the pathway cofactor biosynthesis; coenzyme A biosynthesis; CoA from (R)-pantothenate: step 4/5. In terms of biological role, reversibly transfers an adenylyl group from ATP to 4'-phosphopantetheine, yielding dephospho-CoA (dPCoA) and pyrophosphate. The polypeptide is Phosphopantetheine adenylyltransferase (Rhodococcus jostii (strain RHA1)).